The sequence spans 346 residues: MKTLQELTRPNIWKLKPYSSARDEYKGAVASVFLDANENPYNLPHNRYPDPMQWELKTLLSKIKKVSPQHIFLGNGSDEAIDLVFRAFCEPEKDNVVAIDPTYGMYQVCADVNNVEYRKVLLDENFQFSAEKLLAATDERTKLIFLCSPNNPTGNDLLRSEIEKILREFEGLVILDEAYNDFSEAPSFLEELDKYPNLVVFQTFSKAWGCAAIRLGMAFASEAIIGILSKIKYPYNVNQLTQQQAIAMLHKYYEIERWIKTLKEERDYLEEEFAKLSCTVRMYPSDSNFFLAKVTDAVKIYNYLVGEGIIVRNRHSISLCCNCLRVTVGTRVENNTLLAALKKYQG.

K206 bears the N6-(pyridoxal phosphate)lysine mark.

It belongs to the class-II pyridoxal-phosphate-dependent aminotransferase family. Histidinol-phosphate aminotransferase subfamily. Homodimer. It depends on pyridoxal 5'-phosphate as a cofactor.

It catalyses the reaction L-histidinol phosphate + 2-oxoglutarate = 3-(imidazol-4-yl)-2-oxopropyl phosphate + L-glutamate. The protein operates within amino-acid biosynthesis; L-histidine biosynthesis; L-histidine from 5-phospho-alpha-D-ribose 1-diphosphate: step 7/9. The polypeptide is Histidinol-phosphate aminotransferase (Bacteroides thetaiotaomicron (strain ATCC 29148 / DSM 2079 / JCM 5827 / CCUG 10774 / NCTC 10582 / VPI-5482 / E50)).